The sequence spans 155 residues: DNA-directed RNA polymerase 1A (155 aa).

Residue Asp-88 is part of the active site.

Belongs to the phage and mitochondrial RNA polymerase family.

The enzyme catalyses RNA(n) + a ribonucleoside 5'-triphosphate = RNA(n+1) + diphosphate. In terms of biological role, DNA-dependent RNA polymerase catalyzes the transcription of DNA into RNA using the four ribonucleoside triphosphates as substrates. The protein is DNA-directed RNA polymerase 1A (RPOT1-SYL) of Nicotiana tabacum (Common tobacco).